Reading from the N-terminus, the 396-residue chain is Ribosomal RNA large subunit methyltransferase G (396 aa).

Belongs to the methyltransferase superfamily. RlmG family.

It localises to the cytoplasm. It carries out the reaction guanosine(1835) in 23S rRNA + S-adenosyl-L-methionine = N(2)-methylguanosine(1835) in 23S rRNA + S-adenosyl-L-homocysteine + H(+). Its function is as follows. Specifically methylates the guanine in position 1835 (m2G1835) of 23S rRNA. The sequence is that of Ribosomal RNA large subunit methyltransferase G from Yersinia enterocolitica serotype O:8 / biotype 1B (strain NCTC 13174 / 8081).